We begin with the raw amino-acid sequence, 625 residues long: Pentatricopeptide repeat-containing protein At2g36980, mitochondrial (625 aa).

The transit peptide at Met-1–Leu-7 directs the protein to the mitochondrion. PPR repeat units lie at residues Val-3–Leu-33, Asp-34–Pro-68, Asp-69–Ala-103, Ser-104–Asp-134, Asn-137–Arg-167, Val-168–Pro-202, Asp-203–Ser-238, Ala-239–Leu-269, Thr-270–Lys-300, Asn-301–Ser-335, Asp-336–Gly-370, Tyr-371–Lys-401, Asp-402–Pro-436, Asp-437–Pro-471, and Glu-473–Leu-503. Residues Ser-512–Gly-587 are type E motif. The segment at Asn-588–Arg-618 is type E(+) motif.

The protein belongs to the PPR family. PCMP-E subfamily.

The protein resides in the mitochondrion. The sequence is that of Pentatricopeptide repeat-containing protein At2g36980, mitochondrial (PCMP-E73) from Arabidopsis thaliana (Mouse-ear cress).